Here is an 85-residue protein sequence, read N- to C-terminus: ATP synthase subunit c (85 aa).

A run of 2 helical transmembrane segments spans residues 20 to 40 (LGAGIAVFALAGVGMGLGNIF) and 65 to 85 (FALTEAVALFALLIAFLILFA).

This sequence belongs to the ATPase C chain family. In terms of assembly, F-type ATPases have 2 components, F(1) - the catalytic core - and F(0) - the membrane proton channel. F(1) has five subunits: alpha(3), beta(3), gamma(1), delta(1), epsilon(1). F(0) has three main subunits: a(1), b(2) and c(10-14). The alpha and beta chains form an alternating ring which encloses part of the gamma chain. F(1) is attached to F(0) by a central stalk formed by the gamma and epsilon chains, while a peripheral stalk is formed by the delta and b chains.

It is found in the cell inner membrane. In terms of biological role, f(1)F(0) ATP synthase produces ATP from ADP in the presence of a proton or sodium gradient. F-type ATPases consist of two structural domains, F(1) containing the extramembraneous catalytic core and F(0) containing the membrane proton channel, linked together by a central stalk and a peripheral stalk. During catalysis, ATP synthesis in the catalytic domain of F(1) is coupled via a rotary mechanism of the central stalk subunits to proton translocation. Key component of the F(0) channel; it plays a direct role in translocation across the membrane. A homomeric c-ring of between 10-14 subunits forms the central stalk rotor element with the F(1) delta and epsilon subunits. In Gluconobacter oxydans (strain 621H) (Gluconobacter suboxydans), this protein is ATP synthase subunit c.